Reading from the N-terminus, the 90-residue chain is Evasin P1128 (90 aa).

Residues 1–18 (MFIALGIQLFVAVTYAAG) form the signal peptide. 3 cysteine pairs are disulfide-bonded: Cys-29-Cys-51, Cys-33-Cys-53, and Cys-44-Cys-64. The N-linked (GlcNAc...) asparagine glycan is linked to Asn-32.

The protein resides in the secreted. Functionally, salivary chemokine-binding protein which binds to host chemokines CXCL1, CXCL2, CXCL3, CXCL5 and CXCL8. This is Evasin P1128 from Ixodes ricinus (Common tick).